Consider the following 84-residue polypeptide: UPF0298 protein NWMN_0985 (84 aa).

This sequence belongs to the UPF0298 family.

The protein resides in the cytoplasm. The polypeptide is UPF0298 protein NWMN_0985 (Staphylococcus aureus (strain Newman)).